The following is an 85-amino-acid chain: Toxin BmKT (85 aa).

A signal peptide spans 1 to 19 (MNYLVFFSLALLLMTGVES). One can recognise an LCN-type CS-alpha/beta domain in the interval 21–83 (RDGYIADDKN…VPIRVPGKCN (63 aa)). Disulfide bonds link C31–C82, C35–C55, C41–C65, and C45–C67.

Belongs to the long (4 C-C) scorpion toxin superfamily. Sodium channel inhibitor family. Alpha subfamily. In terms of tissue distribution, expressed by the venom gland.

Its subcellular location is the secreted. Functionally, binds to sodium channels (Nav) and inhibits the inactivation of the activated channels, thereby blocking neuronal transmission. Tested on mice, has antitumor effect and strong inhibitory effect on pain. The sequence is that of Toxin BmKT from Olivierus martensii (Manchurian scorpion).